The chain runs to 35 residues: Photosystem II reaction center protein M (35 aa).

A helical transmembrane segment spans residues 5–25; sequence ILAFVATALFILIPTAFLLIL.

The protein belongs to the PsbM family. As to quaternary structure, PSII is composed of 1 copy each of membrane proteins PsbA, PsbB, PsbC, PsbD, PsbE, PsbF, PsbH, PsbI, PsbJ, PsbK, PsbL, PsbM, PsbT, PsbX, PsbY, PsbZ, Psb30/Ycf12, at least 3 peripheral proteins of the oxygen-evolving complex and a large number of cofactors. It forms dimeric complexes.

Its subcellular location is the plastid. The protein resides in the chloroplast thylakoid membrane. Functionally, one of the components of the core complex of photosystem II (PSII). PSII is a light-driven water:plastoquinone oxidoreductase that uses light energy to abstract electrons from H(2)O, generating O(2) and a proton gradient subsequently used for ATP formation. It consists of a core antenna complex that captures photons, and an electron transfer chain that converts photonic excitation into a charge separation. This subunit is found at the monomer-monomer interface. This Adiantum capillus-veneris (Maidenhair fern) protein is Photosystem II reaction center protein M.